The following is a 270-amino-acid chain: Interleukin-1 alpha (270 aa).

The propeptide occupies 1–114 (MAKVPDLFED…HDLEETIQPR (114 aa)). The N-linked (GlcNAc...) asparagine glycan is linked to Asn64. Lys85 is modified (N6-acetyllysine). Residues 85–89 (KKRRL) form a nuclear localization signal (NLS) region. The residue at position 90 (Ser90) is a Phosphoserine. N-linked (GlcNAc...) asparagine glycosylation is found at Asn139 and Asn143.

Belongs to the IL-1 family. In terms of assembly, monomer. Interacts with TMED10; the interaction mediates the translocation from the cytoplasm into the ERGIC (endoplasmic reticulum-Golgi intermediate compartment) and thereby secretion. Interacts with IL1R1. Interacts with S100A13; this interaction is the first step in the export of IL1A, followed by direct translocation of this complex across the plasma membrane. In terms of processing, acetylated within its nuclear localization sequence, which impacts subcellular localization. Post-translationally, proteolytic processed by CAPN1 in a calcium-dependent manner. Cleavage from 31 kDa precursor to 18 kDa biologically active molecules. Phosphorylated. Phosphorylation greatly enhances susceptibility to digestion and promotes the conversion of pre-IL1A alpha to the biologically active IL1A.

It is found in the nucleus. The protein localises to the cytoplasm. It localises to the secreted. In terms of biological role, cytokine constitutively present intracellularly in nearly all resting non-hematopoietic cells that plays an important role in inflammation and bridges the innate and adaptive immune systems. After binding to its receptor IL1R1 together with its accessory protein IL1RAP, forms the high affinity interleukin-1 receptor complex. Signaling involves the recruitment of adapter molecules such as MYD88, IRAK1 or IRAK4. In turn, mediates the activation of NF-kappa-B and the three MAPK pathways p38, p42/p44 and JNK pathways. Within the cell, acts as an alarmin and cell death results in its liberation in the extracellular space after disruption of the cell membrane to induce inflammation and alert the host to injury or damage. In addition to its role as a danger signal, which occurs when the cytokine is passively released by cell necrosis, directly senses DNA damage and acts as a signal for genotoxic stress without loss of cell integrity. The protein is Interleukin-1 alpha of Mus musculus (Mouse).